Reading from the N-terminus, the 669-residue chain is Probable potassium transport system protein Kup (669 aa).

12 consecutive transmembrane segments (helical) span residues Val47–Leu67, Val86–Met106, Thr144–Ile164, Gly172–Met192, Ile206–Ile226, Gly252–Leu272, Trp288–Leu308, Ala326–Ile346, Ile378–Phe398, Leu404–Phe424, Leu435–Ala455, and Ile460–Thr480.

The protein belongs to the HAK/KUP transporter (TC 2.A.72) family.

Its subcellular location is the cell inner membrane. It carries out the reaction K(+)(in) + H(+)(in) = K(+)(out) + H(+)(out). Functionally, transport of potassium into the cell. Likely operates as a K(+):H(+) symporter. The polypeptide is Probable potassium transport system protein Kup (Bdellovibrio bacteriovorus (strain ATCC 15356 / DSM 50701 / NCIMB 9529 / HD100)).